Reading from the N-terminus, the 318-residue chain is Transaldolase (318 aa).

Lysine 126 acts as the Schiff-base intermediate with substrate in catalysis.

The protein belongs to the transaldolase family. Type 1 subfamily. In terms of assembly, homodimer.

It is found in the cytoplasm. The enzyme catalyses D-sedoheptulose 7-phosphate + D-glyceraldehyde 3-phosphate = D-erythrose 4-phosphate + beta-D-fructose 6-phosphate. Its pathway is carbohydrate degradation; pentose phosphate pathway; D-glyceraldehyde 3-phosphate and beta-D-fructose 6-phosphate from D-ribose 5-phosphate and D-xylulose 5-phosphate (non-oxidative stage): step 2/3. Functionally, transaldolase is important for the balance of metabolites in the pentose-phosphate pathway. The polypeptide is Transaldolase (Variovorax paradoxus (strain S110)).